The primary structure comprises 211 residues: Transcription antitermination protein NusB (211 aa).

Belongs to the NusB family.

Involved in transcription antitermination. Required for transcription of ribosomal RNA (rRNA) genes. Binds specifically to the boxA antiterminator sequence of the ribosomal RNA (rrn) operons. This Trichormus variabilis (strain ATCC 29413 / PCC 7937) (Anabaena variabilis) protein is Transcription antitermination protein NusB.